The sequence spans 352 residues: Ion-translocating oxidoreductase complex subunit D (352 aa).

A run of 5 helical transmembrane segments spans residues 20 to 40, 42 to 62, 78 to 109, 123 to 143, and 148 to 168; these read IMLLVLLAAVPGIAAQLWFFG, GTLVQILLASVSALLAEALVL, ALLTGLLLAVSIPPLAPWWMVVLGTVFAVIIA, PAMIGYVVLLISFPVQMTSWL, and IAVNIPGFIDAIQVIFSGHTA. Position 187 is an FMN phosphoryl threonine (Thr-187). Helical transmembrane passes span 214 to 234, 242 to 262, 267 to 287, 301 to 321, and 322 to 342; these read ILAGAGWQWVNLAWLAGGLWL, WHIPLSFLVTLALCATLGWLF, LAAPQIHLLSGATMLGAFFIL, LIFGALAGLLVWLIRSFGGYP, and DGVAFAVLLANITVPLIDYYT.

Belongs to the NqrB/RnfD family. In terms of assembly, the complex is composed of six subunits: RsxA, RsxB, RsxC, RsxD, RsxE and RsxG. It depends on FMN as a cofactor.

The protein localises to the cell inner membrane. Part of a membrane-bound complex that couples electron transfer with translocation of ions across the membrane. Required to maintain the reduced state of SoxR. The sequence is that of Ion-translocating oxidoreductase complex subunit D from Escherichia coli (strain SE11).